A 377-amino-acid chain; its full sequence is Beta sliding clamp (377 aa).

This sequence belongs to the beta sliding clamp family. In terms of assembly, forms a ring-shaped head-to-tail homodimer around DNA which binds and tethers DNA polymerases and other proteins to the DNA. The DNA replisome complex has a single clamp-loading complex (3 tau and 1 each of delta, delta', psi and chi subunits) which binds 3 Pol III cores (1 core on the leading strand and 2 on the lagging strand) each with a beta sliding clamp dimer. Additional proteins in the replisome are other copies of gamma, psi and chi, Ssb, DNA helicase and RNA primase.

The protein localises to the cytoplasm. Its function is as follows. Confers DNA tethering and processivity to DNA polymerases and other proteins. Acts as a clamp, forming a ring around DNA (a reaction catalyzed by the clamp-loading complex) which diffuses in an ATP-independent manner freely and bidirectionally along dsDNA. Initially characterized for its ability to contact the catalytic subunit of DNA polymerase III (Pol III), a complex, multichain enzyme responsible for most of the replicative synthesis in bacteria; Pol III exhibits 3'-5' exonuclease proofreading activity. The beta chain is required for initiation of replication as well as for processivity of DNA replication. The protein is Beta sliding clamp (dnaN) of Staphylococcus epidermidis (strain ATCC 35984 / DSM 28319 / BCRC 17069 / CCUG 31568 / BM 3577 / RP62A).